The chain runs to 340 residues: Glyceraldehyde-3-phosphate dehydrogenase (340 aa).

Residues 11–12 (SI) and Gly-111 each bind NAD(+). 140–142 (SCN) contacts D-glyceraldehyde 3-phosphate. Catalysis depends on Cys-141, which acts as the Nucleophile. Arg-169 is an NAD(+) binding site. 195–196 (HG) provides a ligand contact to D-glyceraldehyde 3-phosphate. Gln-303 is an NAD(+) binding site.

This sequence belongs to the glyceraldehyde-3-phosphate dehydrogenase family. In terms of assembly, homotetramer.

The protein localises to the cytoplasm. It carries out the reaction D-glyceraldehyde 3-phosphate + phosphate + NADP(+) = (2R)-3-phospho-glyceroyl phosphate + NADPH + H(+). The catalysed reaction is D-glyceraldehyde 3-phosphate + phosphate + NAD(+) = (2R)-3-phospho-glyceroyl phosphate + NADH + H(+). It participates in carbohydrate degradation; glycolysis; pyruvate from D-glyceraldehyde 3-phosphate: step 1/5. The protein is Glyceraldehyde-3-phosphate dehydrogenase of Methanococcus maripaludis (strain C5 / ATCC BAA-1333).